A 183-amino-acid chain; its full sequence is Ribulose bisphosphate carboxylase small subunit, chloroplastic 3 (183 aa).

A chloroplast-targeting transit peptide spans 1-43; it reads MATTMLNRSVIVNKEVAKTPNFPRATKNNKGFASNAAVQKCRD.

It belongs to the RuBisCO small chain family. In terms of assembly, heterohexadecamer of 8 large and 8 small subunits.

It is found in the plastid. Its subcellular location is the chloroplast. In terms of biological role, ruBisCO catalyzes two reactions: the carboxylation of D-ribulose 1,5-bisphosphate, the primary event in carbon dioxide fixation, as well as the oxidative fragmentation of the pentose substrate. Both reactions occur simultaneously and in competition at the same active site. Although the small subunit is not catalytic it is essential for maximal activity. The sequence is that of Ribulose bisphosphate carboxylase small subunit, chloroplastic 3 from Acetabularia peniculus (Green alga).